Reading from the N-terminus, the 429-residue chain is Glutamate-1-semialdehyde 2,1-aminomutase (429 aa).

Lys268 carries the N6-(pyridoxal phosphate)lysine modification.

This sequence belongs to the class-III pyridoxal-phosphate-dependent aminotransferase family. HemL subfamily. Homodimer. Requires pyridoxal 5'-phosphate as cofactor.

The protein resides in the cytoplasm. The catalysed reaction is (S)-4-amino-5-oxopentanoate = 5-aminolevulinate. Its pathway is porphyrin-containing compound metabolism; protoporphyrin-IX biosynthesis; 5-aminolevulinate from L-glutamyl-tRNA(Glu): step 2/2. In Serratia proteamaculans (strain 568), this protein is Glutamate-1-semialdehyde 2,1-aminomutase.